A 765-amino-acid chain; its full sequence is uncharacterized protein (765 aa).

The signal sequence occupies residues Met1–Ala22. A lipid anchor (N-palmitoyl cysteine) is attached at Cys23. Cys23 is lipidated: S-diacylglycerol cysteine. 2 disordered regions span residues Glu177–Ala203 and Thr218–Ser255. Over residues Thr179–Arg192 the composition is skewed to polar residues. Positions Ser236–Gly247 are enriched in low complexity.

The protein belongs to the MG185/MG260 family.

It is found in the cell membrane. This is an uncharacterized protein from Mycoplasma genitalium (strain ATCC 33530 / DSM 19775 / NCTC 10195 / G37) (Mycoplasmoides genitalium).